Reading from the N-terminus, the 617-residue chain is Chaperone protein HscA homolog (617 aa).

Belongs to the heat shock protein 70 family.

Its function is as follows. Probable chaperone. Has a low intrinsic ATPase activity which is markedly stimulated by HscB. The protein is Chaperone protein HscA homolog of Vibrio parahaemolyticus serotype O3:K6 (strain RIMD 2210633).